The chain runs to 181 residues: Large ribosomal subunit protein uL5 (181 aa).

This sequence belongs to the universal ribosomal protein uL5 family. In terms of assembly, part of the 50S ribosomal subunit; contacts the 5S rRNA and probably tRNA. Forms a bridge to the 30S subunit in the 70S ribosome.

Its function is as follows. This is one of the proteins that bind and probably mediate the attachment of the 5S RNA into the large ribosomal subunit, where it forms part of the central protuberance. In the 70S ribosome it contacts protein S13 of the 30S subunit (bridge B1b), connecting the 2 subunits; this bridge is implicated in subunit movement. May contact the P site tRNA; the 5S rRNA and some of its associated proteins might help stabilize positioning of ribosome-bound tRNAs. The chain is Large ribosomal subunit protein uL5 from Methanococcus maripaludis (strain C7 / ATCC BAA-1331).